We begin with the raw amino-acid sequence, 396 residues long: MSVRLVLTKGREKSLLRRHPWVFSGAVARMEGKASLGETIDIVDHQGKWLARGAYSPASQIRARVWTFDKDETIDIAFFTRRLQQAQQWRDWLAKRDGLDSYRLIAGESDGMPGVTIDRFANFLVLQLLSAGAEYQRAALISALQTLYPECAIYDRSDVAVRKKEGMELTQGTVTGELPPALLPIEEHGMKLFVDIQGGHKTGYYLDQRDSRLATRQYVKDKRVLNCFSYTGGFAVSALMGGCSQVVSVDTSQEALDVAKQNVELNKLDLSKAEFVRDDVFKLLRKYRDQGEKFDVIVMDPPKFVENKSQLMGACRGYKDINMLAIQLLNPGGILLTFSCSGLMTTDLFQKLVADAAVDAGRDVQFIEQFRQAADHPVIATYPEGLYLKGFACRVM.

In terms of domain architecture, PUA spans 2–81 (SVRLVLTKGR…ETIDIAFFTR (80 aa)).

The protein belongs to the methyltransferase superfamily. RlmI family.

Its subcellular location is the cytoplasm. It catalyses the reaction cytidine(1962) in 23S rRNA + S-adenosyl-L-methionine = 5-methylcytidine(1962) in 23S rRNA + S-adenosyl-L-homocysteine + H(+). Functionally, specifically methylates the cytosine at position 1962 (m5C1962) of 23S rRNA. The sequence is that of Ribosomal RNA large subunit methyltransferase I from Enterobacter sp. (strain 638).